The sequence spans 498 residues: Acetyl-coenzyme A carboxylase carboxyl transferase subunit beta, chloroplastic (498 aa).

A CoA carboxyltransferase N-terminal domain is found at 228–498; the sequence is LWVQCEICYG…LNHNLSRTLT (271 aa). Zn(2+) is bound by residues C232, C235, C251, and C254. The segment at 232–254 adopts a C4-type zinc-finger fold; that stretch reads CEICYGLNYKKFFKSKMNICEQC.

This sequence belongs to the AccD/PCCB family. Acetyl-CoA carboxylase is a heterohexamer composed of biotin carboxyl carrier protein, biotin carboxylase and 2 subunits each of ACCase subunit alpha and ACCase plastid-coded subunit beta (accD). It depends on Zn(2+) as a cofactor.

It is found in the plastid. Its subcellular location is the chloroplast stroma. The enzyme catalyses N(6)-carboxybiotinyl-L-lysyl-[protein] + acetyl-CoA = N(6)-biotinyl-L-lysyl-[protein] + malonyl-CoA. The protein operates within lipid metabolism; malonyl-CoA biosynthesis; malonyl-CoA from acetyl-CoA: step 1/1. Component of the acetyl coenzyme A carboxylase (ACC) complex. Biotin carboxylase (BC) catalyzes the carboxylation of biotin on its carrier protein (BCCP) and then the CO(2) group is transferred by the transcarboxylase to acetyl-CoA to form malonyl-CoA. The chain is Acetyl-coenzyme A carboxylase carboxyl transferase subunit beta, chloroplastic from Populus trichocarpa (Western balsam poplar).